A 559-amino-acid chain; its full sequence is Glutamine--tRNA ligase (559 aa).

A 'HIGH' region motif is present at residues Pro44–His54. ATP-binding positions include Glu45–Asn47 and His51–Ser57. The L-glutamine site is built by Asp77 and Tyr222. Residues Thr241 and Arg272–Leu273 each bind ATP. A 'KMSKS' region motif is present at residues Leu279–Arg283.

The protein belongs to the class-I aminoacyl-tRNA synthetase family. Monomer.

The protein localises to the cytoplasm. The enzyme catalyses tRNA(Gln) + L-glutamine + ATP = L-glutaminyl-tRNA(Gln) + AMP + diphosphate. The polypeptide is Glutamine--tRNA ligase (Actinobacillus succinogenes (strain ATCC 55618 / DSM 22257 / CCUG 43843 / 130Z)).